The chain runs to 267 residues: 4-hydroxy-tetrahydrodipicolinate reductase (267 aa).

Residues Gly-8–Met-13 and Asp-34 contribute to the NAD(+) site. Arg-35 contributes to the NADP(+) binding site. NAD(+) contacts are provided by residues Gly-98–Thr-100 and Ala-122–Phe-125. The Proton donor/acceptor role is filled by His-155. His-156 contacts (S)-2,3,4,5-tetrahydrodipicolinate. The active-site Proton donor is the Lys-159. Residue Gly-165–Thr-166 coordinates (S)-2,3,4,5-tetrahydrodipicolinate.

Belongs to the DapB family.

It localises to the cytoplasm. It carries out the reaction (S)-2,3,4,5-tetrahydrodipicolinate + NAD(+) + H2O = (2S,4S)-4-hydroxy-2,3,4,5-tetrahydrodipicolinate + NADH + H(+). The catalysed reaction is (S)-2,3,4,5-tetrahydrodipicolinate + NADP(+) + H2O = (2S,4S)-4-hydroxy-2,3,4,5-tetrahydrodipicolinate + NADPH + H(+). The protein operates within amino-acid biosynthesis; L-lysine biosynthesis via DAP pathway; (S)-tetrahydrodipicolinate from L-aspartate: step 4/4. Its function is as follows. Catalyzes the conversion of 4-hydroxy-tetrahydrodipicolinate (HTPA) to tetrahydrodipicolinate. This is 4-hydroxy-tetrahydrodipicolinate reductase from Pseudomonas putida (strain W619).